A 323-amino-acid chain; its full sequence is Ribose 1,5-bisphosphate isomerase (323 aa).

Substrate contacts are provided by residues 22-25 (RGAA) and arginine 65. Cysteine 130 functions as the Proton acceptor in the catalytic mechanism. Aspartate 199 serves as the catalytic Proton donor. Substrate-binding positions include 209-210 (NK) and lysine 235. Lysine 210 is covalently cross-linked (Glycyl lysine isopeptide (Lys-Gly) (interchain with G-Cter in SAMP2)).

It belongs to the eIF-2B alpha/beta/delta subunits family. R15P isomerase subfamily.

It catalyses the reaction alpha-D-ribose 1,5-bisphosphate = D-ribulose 1,5-bisphosphate. Its function is as follows. Catalyzes the isomerization of ribose 1,5-bisphosphate (R15P) to ribulose 1,5-bisphosphate (RuBP), the CO(2) acceptor and substrate for RubisCO. Functions in an archaeal AMP degradation pathway, together with AMP phosphorylase and RubisCO. The sequence is that of Ribose 1,5-bisphosphate isomerase from Haloferax volcanii (strain ATCC 29605 / DSM 3757 / JCM 8879 / NBRC 14742 / NCIMB 2012 / VKM B-1768 / DS2) (Halobacterium volcanii).